A 63-amino-acid polypeptide reads, in one-letter code: Juvenile hormone esterase, isoform B (63 aa).

A glycan (N-linked (GlcNAc...) asparagine) is linked at asparagine 20.

Belongs to the type-B carboxylesterase/lipase family. As to expression, fat body, the site of their biosynthesis, and the hemolymph where it is secreted.

The enzyme catalyses juvenile hormone I + H2O = juvenile hormone I carboxylate + methanol + H(+). It catalyses the reaction juvenile hormone III + H2O = juvenile hormone III carboxylate + methanol + H(+). Its function is as follows. JH esterase plays a crucial role in the decrease of JH activity in lepidopteran insects, by hydrolyzing the methyl ester of JH. It is also involved in the transport of JH. This is Juvenile hormone esterase, isoform B from Trichoplusia ni (Cabbage looper).